We begin with the raw amino-acid sequence, 438 residues long: Metacaspase-1B (438 aa).

Residues 1 to 125 (MYYHHSHQGW…SQHFGRGAPS (125 aa)) are disordered. Residues 29 to 38 (PYPYSSNAQY) are compositionally biased toward low complexity. Pro residues predominate over residues 39 to 74 (QPPPGPPPTSHYAPPPGPPPSHYYPPPGSYPSPAPS). Residues His222 and Cys278 contribute to the active site.

The protein belongs to the peptidase C14B family.

Its function is as follows. Involved in cell death (apoptosis). The polypeptide is Metacaspase-1B (casB) (Aspergillus niger (strain ATCC MYA-4892 / CBS 513.88 / FGSC A1513)).